A 245-amino-acid polypeptide reads, in one-letter code: MANPKYKRILIKLSGEALAGERGVGIDIQTVQTIAKEIQEVHSLGIEIALVIGGGNLWRGEPAAEAGMDRVQADYTGMLGTVMNALVMADSLQQVGVDTRVQTAIAMQQVAEPYVRGRALRHLEKGRIVIFGAGIGSPYFSTDTTAALRAAEIEADAILMAKNGVDGVYNADPKKDKTAVKFEELTHRDVINKGLRIMDSTASTLSMDNDIDLVVFNMNQSGNIKRVVFGENIGTTVSNNIEEKE.

12–15 (KLSG) lines the ATP pocket. The tract at residues 20–25 (GERGVG) is involved in allosteric activation by GTP. G54 serves as a coordination point for UMP. ATP contacts are provided by G55 and R59. Residues D74 and 135–142 (IGSPYFST) contribute to the UMP site. N163, Y169, and D172 together coordinate ATP.

This sequence belongs to the UMP kinase family. As to quaternary structure, homohexamer.

It is found in the cytoplasm. It carries out the reaction UMP + ATP = UDP + ADP. It participates in pyrimidine metabolism; CTP biosynthesis via de novo pathway; UDP from UMP (UMPK route): step 1/1. Allosterically activated by GTP. Inhibited by UTP. Catalyzes the reversible phosphorylation of UMP to UDP. The polypeptide is Uridylate kinase (Streptococcus pneumoniae serotype 2 (strain D39 / NCTC 7466)).